The following is a 153-amino-acid chain: Small ribosomal subunit protein bS16 (153 aa).

Residues 130–153 (EAEAAAAAEEAPAEEAAEEAPAEA) are disordered. Acidic residues predominate over residues 140–153 (APAEEAAEEAPAEA).

Belongs to the bacterial ribosomal protein bS16 family.

This is Small ribosomal subunit protein bS16 from Bifidobacterium longum subsp. infantis (strain ATCC 15697 / DSM 20088 / JCM 1222 / NCTC 11817 / S12).